The following is a 392-amino-acid chain: N-acetylneuraminate epimerase (392 aa).

An N-terminal signal peptide occupies residues 1 to 35 (MTQLYPQYKKQLTTKIVLFSALSLLMMASLPNTYA). Kelch repeat units lie at residues 56-100 (SLYV…VVLA), 102-155 (KLYV…TTLD), 157-192 (SQAV…AVIN), 193-238 (AYFN…SRMD), 241-290 (LILI…LAGA), 312-361 (KQFN…QGPD), and 363-392 (VILI…LHIE). The active-site Proton acceptor is the E247.

This sequence belongs to the NanM family. As to quaternary structure, homodimer.

It localises to the periplasm. The enzyme catalyses N-acetyl-alpha-neuraminate = N-acetyl-beta-neuraminate. Functionally, converts alpha-N-acetylneuranimic acid (Neu5Ac) to the beta-anomer, accelerating the equilibrium between the alpha- and beta-anomers. Probably facilitates sialidase-negative bacteria to compete successfully for limited amounts of extracellular Neu5Ac, which is likely taken up in the beta-anomer. In addition, the rapid removal of sialic acid from solution might be advantageous to the bacterium to damp down host responses. This is N-acetylneuraminate epimerase from Yersinia pseudotuberculosis serotype O:1b (strain IP 31758).